Consider the following 692-residue polypeptide: Translation initiation factor IF-2 (692 aa).

In terms of domain architecture, tr-type G spans Pro-194–Lys-363. The G1 stretch occupies residues Gly-203–Thr-210. Gly-203–Thr-210 serves as a coordination point for GTP. Positions Gly-228–His-232 are G2. A G3 region spans residues Asp-249 to Gly-252. Residues Asp-249–His-253 and Asn-303–Asp-306 contribute to the GTP site. Residues Asn-303 to Asp-306 form a G4 region. Positions Ser-339 to Lys-341 are G5.

This sequence belongs to the TRAFAC class translation factor GTPase superfamily. Classic translation factor GTPase family. IF-2 subfamily.

The protein localises to the cytoplasm. One of the essential components for the initiation of protein synthesis. Protects formylmethionyl-tRNA from spontaneous hydrolysis and promotes its binding to the 30S ribosomal subunits. Also involved in the hydrolysis of GTP during the formation of the 70S ribosomal complex. In Thermoanaerobacter sp. (strain X514), this protein is Translation initiation factor IF-2.